Reading from the N-terminus, the 208-residue chain is MCRGNLYIISAPSGAGKSSLISALLERDKNDSMTVSISHTTRSPRPGEIDGVHYHFVSHEKFEQLILENSFLEYAKVFGGNYYGTSLLNIEKNLAAGIDVFLDIDWQGARQIREKRPDVKSIFILPPSISALEKRLIGRGQDSQDIIAKRMEKAADEISHYDEYDYVIINADFDQALVDLEHILRAERLTVNYQKTQNAALIHQLLVK.

Residues 4–185 (GNLYIISAPS…ALVDLEHILR (182 aa)) form the Guanylate kinase-like domain. ATP is bound at residue 11–18 (APSGAGKS).

This sequence belongs to the guanylate kinase family.

The protein resides in the cytoplasm. It catalyses the reaction GMP + ATP = GDP + ADP. Essential for recycling GMP and indirectly, cGMP. This Histophilus somni (strain 129Pt) (Haemophilus somnus) protein is Guanylate kinase.